We begin with the raw amino-acid sequence, 144 residues long: 3-dehydroquinate dehydratase (144 aa).

Y22 serves as the catalytic Proton acceptor. Residues N73, H79, and D86 each contribute to the substrate site. The Proton donor role is filled by H99. Substrate-binding positions include 100 to 101 and R110; that span reads LS.

Belongs to the type-II 3-dehydroquinase family. As to quaternary structure, homododecamer.

It catalyses the reaction 3-dehydroquinate = 3-dehydroshikimate + H2O. The protein operates within metabolic intermediate biosynthesis; chorismate biosynthesis; chorismate from D-erythrose 4-phosphate and phosphoenolpyruvate: step 3/7. Catalyzes a trans-dehydration via an enolate intermediate. In Herpetosiphon aurantiacus (strain ATCC 23779 / DSM 785 / 114-95), this protein is 3-dehydroquinate dehydratase.